Consider the following 502-residue polypeptide: Xylulose kinase (502 aa).

82 to 83 serves as a coordination point for substrate; the sequence is MH. The Proton acceptor role is filled by aspartate 240.

It belongs to the FGGY kinase family.

It catalyses the reaction D-xylulose + ATP = D-xylulose 5-phosphate + ADP + H(+). Its function is as follows. Catalyzes the phosphorylation of D-xylulose to D-xylulose 5-phosphate. This Levilactobacillus brevis (Lactobacillus brevis) protein is Xylulose kinase.